The primary structure comprises 211 residues: uncharacterized protein (211 aa).

The next 4 membrane-spanning stretches (helical) occupy residues 77 to 97 (FLMFHLFCNSALFAVGIAITI), 113 to 133 (GISVSVWLILAAYMIYWVLIG), 152 to 172 (ILISMVPNVIFMLVFLFNVIP), and 179 to 199 (LLTPWFVGTCAFATLLFPLFG).

The protein resides in the cell membrane. This is an uncharacterized protein from Bacillus subtilis (strain 168).